We begin with the raw amino-acid sequence, 478 residues long: Cytochrome c-552 (478 aa).

Residues 1–26 (MTRIKINARRIFSLLIPFFFFTSVHA) form the signal peptide. His-94 provides a ligand contact to heme c. The heme site is built by Cys-122, Cys-125, and Lys-126. Heme c-binding residues include Cys-160, Cys-163, His-164, Cys-209, Cys-212, and His-213. Glu-215, Tyr-216, Lys-261, and Gln-263 together coordinate Ca(2+). Residue Tyr-216 coordinates substrate. His-264 provides a ligand contact to substrate. 9 residues coordinate heme c: His-275, Cys-282, Cys-285, His-286, His-301, Cys-314, Cys-317, His-318, and His-393.

The protein belongs to the cytochrome c-552 family. Ca(2+) serves as cofactor. Requires heme c as cofactor.

It is found in the periplasm. It catalyses the reaction 6 Fe(III)-[cytochrome c] + NH4(+) + 2 H2O = 6 Fe(II)-[cytochrome c] + nitrite + 8 H(+). It participates in nitrogen metabolism; nitrate reduction (assimilation). Catalyzes the reduction of nitrite to ammonia, consuming six electrons in the process. The polypeptide is Cytochrome c-552 (Escherichia coli O17:K52:H18 (strain UMN026 / ExPEC)).